A 479-amino-acid chain; its full sequence is Sulfate adenylyltransferase subunit 1 (479 aa).

Positions K25–R239 constitute a tr-type G domain. Positions G34–S41 are G1. G34–S41 contributes to the GTP binding site. The interval G92–D96 is G2. A G3 region spans residues D113–G116. GTP-binding positions include D113–H117 and N168–D171. Residues N168–D171 form a G4 region. Residues S206–L208 form a G5 region.

Belongs to the TRAFAC class translation factor GTPase superfamily. Classic translation factor GTPase family. CysN/NodQ subfamily. Heterodimer composed of CysD, the smaller subunit, and CysN.

The enzyme catalyses sulfate + ATP + H(+) = adenosine 5'-phosphosulfate + diphosphate. It functions in the pathway sulfur metabolism; hydrogen sulfide biosynthesis; sulfite from sulfate: step 1/3. Functionally, with CysD forms the ATP sulfurylase (ATPS) that catalyzes the adenylation of sulfate producing adenosine 5'-phosphosulfate (APS) and diphosphate, the first enzymatic step in sulfur assimilation pathway. APS synthesis involves the formation of a high-energy phosphoric-sulfuric acid anhydride bond driven by GTP hydrolysis by CysN coupled to ATP hydrolysis by CysD. This Salmonella newport (strain SL254) protein is Sulfate adenylyltransferase subunit 1.